Reading from the N-terminus, the 355-residue chain is Small ribosomal subunit protein uS2 (355 aa).

The protein belongs to the universal ribosomal protein uS2 family.

The polypeptide is Small ribosomal subunit protein uS2 (Methylorubrum extorquens (strain CM4 / NCIMB 13688) (Methylobacterium extorquens)).